The sequence spans 193 residues: Bcl-2-binding component 3 (193 aa).

2 disordered regions span residues 1–32 (MARARQEGSSPEPVEGLARDSPRPFPLGRLMP) and 71–131 (ALGG…VEEE). Position 10 is a phosphoserine (Ser-10). Positions 137-151 (IGAQLRRMADDLNAQ) match the BH3 motif.

Belongs to the Bcl-2 family. In terms of assembly, interacts with MCL1 and BCL2A1. Interacts (via BH3 domain) with BCL2 and BCL2L1/BCL-XL. Interacts (via BH3 domain) with NOL3/ARC (via CARD domain); this interaction prevents BBC3 association with BCL2 and results in CASP8 activation.

It is found in the mitochondrion. Functionally, essential mediator of p53/TP53-dependent and p53/TP53-independent apoptosis. Promotes partial unfolding of BCL2L1 and dissociation of BCL2L1 from p53/TP53, releasing the bound p53/TP53 to induce apoptosis. Regulates ER stress-induced neuronal apoptosis. The protein is Bcl-2-binding component 3 (Bbc3) of Rattus norvegicus (Rat).